A 183-amino-acid chain; its full sequence is NEDD8-conjugating enzyme Ubc12 (183 aa).

M1 is modified (N-acetylmethionine). The disordered stretch occupies residues 1-29 (MIKLFSLKQQKKEEESAGGTKGSSKKASA). The tract at residues 1 to 57 (MIKLFSLKQQKKEEESAGGTKGSSKKASAAQLRIQKDINELNLPKTCDISFSDPDDL) is interaction with UBA3. K3 is modified (N6-acetyllysine). The region spanning 29–173 (AAQLRIQKDI…VQRSMRGGYI (145 aa)) is the UBC core domain. Phosphoserine is present on S50. The active-site Glycyl thioester intermediate is the C111. R169 is modified (asymmetric dimethylarginine; alternate). Position 169 is an omega-N-methylarginine; alternate (R169).

The protein belongs to the ubiquitin-conjugating enzyme family. UBC12 subfamily. In terms of assembly, interacts with UBA3 and RBX1. Interacts (N-terminally acetylated form) with (via DCUN1 domain) DCUN1D1, DCUN1D2, DCUN1D3, DCUN1D4 and DCUN1D5. Post-translationally, the acetylation of Met-1 increases affinity for DCUN1D1 by about 2 orders of magnitude and is crucial for NEDD8 transfer to cullins.

The catalysed reaction is [E1 NEDD8-activating enzyme]-S-[NEDD8 protein]-yl-L-cysteine + [E2 NEDD8-conjugating enzyme]-L-cysteine = [E1 NEDD8-activating enzyme]-L-cysteine + [E2 NEDD8-conjugating enzyme]-S-[NEDD8-protein]-yl-L-cysteine.. It participates in protein modification; protein neddylation. In terms of biological role, accepts the ubiquitin-like protein NEDD8 from the UBA3-NAE1 E1 complex and catalyzes its covalent attachment to other proteins. The specific interaction with the E3 ubiquitin ligase RBX1, but not RBX2, suggests that the RBX1-UBE2M complex neddylates specific target proteins, such as CUL1, CUL2, CUL3 and CUL4. Involved in cell proliferation. This is NEDD8-conjugating enzyme Ubc12 (Ube2m) from Mus musculus (Mouse).